A 179-amino-acid polypeptide reads, in one-letter code: Adenine phosphoribosyltransferase (179 aa).

The protein belongs to the purine/pyrimidine phosphoribosyltransferase family. In terms of assembly, homodimer.

The protein localises to the cytoplasm. It carries out the reaction AMP + diphosphate = 5-phospho-alpha-D-ribose 1-diphosphate + adenine. It functions in the pathway purine metabolism; AMP biosynthesis via salvage pathway; AMP from adenine: step 1/1. In terms of biological role, catalyzes a salvage reaction resulting in the formation of AMP, that is energically less costly than de novo synthesis. This Beijerinckia indica subsp. indica (strain ATCC 9039 / DSM 1715 / NCIMB 8712) protein is Adenine phosphoribosyltransferase.